The sequence spans 524 residues: GMP synthase [glutamine-hydrolyzing] (524 aa).

The Glutamine amidotransferase type-1 domain occupies 9–207 (RILILDFGSQ…VIHICQCIPN (199 aa)). Residue Cys86 is the Nucleophile of the active site. Catalysis depends on residues His181 and Glu183. The GMPS ATP-PPase domain maps to 208 to 399 (WTTKHIIEDS…LGLPADLIYR (192 aa)). ATP is bound at residue 235–241 (SGGVDSA).

As to quaternary structure, homodimer.

The enzyme catalyses XMP + L-glutamine + ATP + H2O = GMP + L-glutamate + AMP + diphosphate + 2 H(+). Its pathway is purine metabolism; GMP biosynthesis; GMP from XMP (L-Gln route): step 1/1. In terms of biological role, catalyzes the synthesis of GMP from XMP. The protein is GMP synthase [glutamine-hydrolyzing] of Coxiella burnetii (strain CbuG_Q212) (Coxiella burnetii (strain Q212)).